The sequence spans 349 residues: GATA zinc finger domain-containing protein 24 (349 aa).

Low complexity-rich tracts occupy residues 95 to 169 (NINR…VNKN) and 177 to 195 (NKSC…NNNS). 2 disordered regions span residues 95 to 227 (NINR…PVIK) and 250 to 294 (DYDY…KPVQ). The span at 196-212 (ENKEKNNINNNNEKENN) shows a compositional bias: basic and acidic residues. Residues 257 to 272 (SNESSSPTLSASTLSS) are compositionally biased toward low complexity. Residues 278 to 289 (KVLKRGRGRPSK) show a composition bias toward basic residues. Residues 295-323 (CFSCFRSNTPEWRKGKDKDGNVIDLCNAC) form a GATA-type zinc finger.

This is GATA zinc finger domain-containing protein 24 (gtaX) from Dictyostelium discoideum (Social amoeba).